A 490-amino-acid chain; its full sequence is Cyclin-T1-3 (490 aa).

Disordered regions lie at residues 275–391 (RVAP…GDVA) and 414–490 (AAED…RLRS). Composition is skewed to polar residues over residues 282–298 (QGND…NQRA) and 352–365 (TANS…SSTM). 2 stretches are compositionally biased toward basic and acidic residues: residues 367–391 (AMKK…GDVA) and 457–490 (QEYR…RLRS).

It belongs to the cyclin family. Cyclin T subfamily.

The protein is Cyclin-T1-3 (CYCT1-3) of Oryza sativa subsp. japonica (Rice).